Here is a 435-residue protein sequence, read N- to C-terminus: UDP-N-acetylmuramate--L-alanine ligase (435 aa).

108-114 (GSHGKTS) lines the ATP pocket.

This sequence belongs to the MurCDEF family.

The protein resides in the cytoplasm. It carries out the reaction UDP-N-acetyl-alpha-D-muramate + L-alanine + ATP = UDP-N-acetyl-alpha-D-muramoyl-L-alanine + ADP + phosphate + H(+). It functions in the pathway cell wall biogenesis; peptidoglycan biosynthesis. Cell wall formation. This chain is UDP-N-acetylmuramate--L-alanine ligase, found in Exiguobacterium sp. (strain ATCC BAA-1283 / AT1b).